The following is a 339-amino-acid chain: Uroporphyrinogen decarboxylase (339 aa).

Residues 23–27, Asp-72, Tyr-147, Thr-202, and His-315 each bind substrate; that span reads RQAGR.

This sequence belongs to the uroporphyrinogen decarboxylase family. As to quaternary structure, homodimer.

The protein localises to the cytoplasm. It carries out the reaction uroporphyrinogen III + 4 H(+) = coproporphyrinogen III + 4 CO2. Its pathway is porphyrin-containing compound metabolism; protoporphyrin-IX biosynthesis; coproporphyrinogen-III from 5-aminolevulinate: step 4/4. Its function is as follows. Catalyzes the decarboxylation of four acetate groups of uroporphyrinogen-III to yield coproporphyrinogen-III. The chain is Uroporphyrinogen decarboxylase from Geotalea uraniireducens (strain Rf4) (Geobacter uraniireducens).